Here is a 479-residue protein sequence, read N- to C-terminus: Cysteine protease effector 1 (479 aa).

In Escherichia coli O1:K1:H7 (strain ATCC 11775 / DSM 30083 / JCM 1649 / NBRC 102203 / NCTC 9001 / U5/41), this protein is Cysteine protease effector 1.